Consider the following 419-residue polypeptide: Enolase (419 aa).

Q161 serves as a coordination point for (2R)-2-phosphoglycerate. The active-site Proton donor is the E205. Mg(2+) is bound by residues D240, E283, and D309. 4 residues coordinate (2R)-2-phosphoglycerate: K334, R363, S364, and K385. K334 serves as the catalytic Proton acceptor.

Belongs to the enolase family. Mg(2+) serves as cofactor.

Its subcellular location is the cytoplasm. It localises to the secreted. The protein localises to the cell surface. The catalysed reaction is (2R)-2-phosphoglycerate = phosphoenolpyruvate + H2O. Its pathway is carbohydrate degradation; glycolysis; pyruvate from D-glyceraldehyde 3-phosphate: step 4/5. Catalyzes the reversible conversion of 2-phosphoglycerate (2-PG) into phosphoenolpyruvate (PEP). It is essential for the degradation of carbohydrates via glycolysis. This chain is Enolase, found in Saccharolobus islandicus (strain M.16.27) (Sulfolobus islandicus).